The following is a 214-amino-acid chain: Peroxiredoxin-5, mitochondrial (214 aa).

The N-terminal 52 residues, 1-52 (MGLAGVCALRRSAGYILVGGAGGQSAAAAARRYSEGEWASGGVRSFSRAAAA), are a transit peptide targeting the mitochondrion. The Thioredoxin domain maps to 56–214 (IKVGDAIPAV…SLAPNIISQL (159 aa)). K75 carries the N6-acetyllysine modification. An N6-acetyllysine; alternate modification is found at K83. K83 is modified (N6-succinyllysine; alternate). C100 functions as the Cysteine sulfenic acid (-SOH) intermediate in the catalytic mechanism. The S-palmitoyl cysteine moiety is linked to residue C100. The cysteines at positions 100 and 204 are disulfide-linked. K116 is modified (N6-succinyllysine). Residues S171 and S182 each carry the phosphoserine modification. Residues 212–214 (SQL) carry the Microbody targeting signal motif.

The protein belongs to the peroxiredoxin family. Prx5 subfamily. In terms of assembly, monomer. In terms of processing, S-palmitoylated. Palmitoylation occurs on the active site, inhibiting its reactivity; therefore PRDX5 palmitoylation status determines its antioxidant capacity. S-palmitoylated. Depalmitoylated by ABHD10. In terms of tissue distribution, widely expressed.

The protein resides in the mitochondrion. Its subcellular location is the cytoplasm. The protein localises to the peroxisome matrix. The enzyme catalyses a hydroperoxide + [thioredoxin]-dithiol = an alcohol + [thioredoxin]-disulfide + H2O. Functionally, thiol-specific peroxidase that catalyzes the reduction of hydrogen peroxide and organic hydroperoxides to water and alcohols, respectively. Plays a role in cell protection against oxidative stress by detoxifying peroxides and as sensor of hydrogen peroxide-mediated signaling events. This Homo sapiens (Human) protein is Peroxiredoxin-5, mitochondrial.